The chain runs to 106 residues: Diptericin A (106 aa).

An N-terminal signal peptide occupies residues methionine 1–alanine 19. A propeptide spans tyrosine 20–proline 23 (removed by a dipeptidylpeptidase).

The protein belongs to the attacin/sarcotoxin-2 family.

Its subcellular location is the secreted. Functionally, antimicrobial peptide required to resist Gram-negative bacterial infections, regulated by Dredd. In Drosophila melanogaster (Fruit fly), this protein is Diptericin A.